Consider the following 307-residue polypeptide: Protein pid-3 (307 aa).

Component of the pid-1 variant of the PETISCO complex (also called the pid-3, erh-2, tofu-6, and ife-3 small RNA complex) containing at least pid-1, tofu-6, ife-3, pid-3, and erh-2, which is required for the biogenesis of a class of 21 nucleotide PIWI-interacting RNAs (piRNAs) that possess a uracil residue at the 5'-end (also called 21U-RNAs). Within the complex interacts with pid-1; the interaction is direct. Component of the tost-1 variant of the PETISCO complex (also called the pid-3, erh-2, tofu-6, and ife-3 small RNA complex) containing at least tost-1, tofu-6, ife-3, pid-3, and erh-2, which plays an essential role in embryogenesis. Within the complex interacts with tost-1. Within the pid-1 and tost-1 variants of the PETISCO complexes interacts with tofu-6 (via the RRM domain) and erh-2. In contrast to the pid-1 variant of the PETISCO complex, the tost-1 variant of the PETISCO complex plays a minor role in the biogenesis of 21U-RNAs. As to expression, expressed in the germline (at protein level).

The protein localises to the cytoplasm. It is found in the perinuclear region. It localises to the nucleus. Its function is as follows. Component of the pid-1 and tost-1 variants of the PETISCO complexes, which have roles in the biogenesis of a class of 21 nucleotide PIWI-interacting RNAs (piRNAs) that possess a uracil residue at the 5'-end (also called 21U-RNAs) and embryogenesis, respectively. Within the pid-1 variant of the PETISCO complex may stabilize 21U-RNA precursor molecules. Promotes the biogenesis of 21U-RNAs. Required for chromosome segregation and cell division in early embryos. The chain is Protein pid-3 from Caenorhabditis elegans.